A 232-amino-acid polypeptide reads, in one-letter code: ATP synthase subunit a (232 aa).

The next 6 membrane-spanning stretches (helical) occupy residues 18 to 38 (LLFI…IAFI), 74 to 94 (WAGL…LGLF), 107 to 127 (TYSL…YLAF), 142 to 162 (ALIP…PIAL), 173 to 193 (GHLL…SLMV), and 195 to 215 (SIPI…VACI).

This sequence belongs to the ATPase A chain family. In terms of assembly, F-type ATPases have 2 components, CF(1) - the catalytic core - and CF(0) - the membrane proton channel. CF(1) has five subunits: alpha(3), beta(3), gamma(1), delta(1), epsilon(1). CF(0) has three main subunits: a, b and c.

It is found in the mitochondrion inner membrane. Mitochondrial membrane ATP synthase (F(1)F(0) ATP synthase or Complex V) produces ATP from ADP in the presence of a proton gradient across the membrane which is generated by electron transport complexes of the respiratory chain. F-type ATPases consist of two structural domains, F(1) - containing the extramembraneous catalytic core and F(0) - containing the membrane proton channel, linked together by a central stalk and a peripheral stalk. During catalysis, ATP synthesis in the catalytic domain of F(1) is coupled via a rotary mechanism of the central stalk subunits to proton translocation. Key component of the proton channel; it may play a direct role in the translocation of protons across the membrane. The sequence is that of ATP synthase subunit a (ATP6) from Paracentrotus lividus (Common sea urchin).